The primary structure comprises 315 residues: DNA-directed RNA polymerase subunit alpha (315 aa).

The alpha N-terminal domain (alpha-NTD) stretch occupies residues 1 to 228 (MIGMEKPKIE…EHLELFISLT (228 aa)). The interval 245-315 (RNKLMEMTIE…FGLSLRQPDD (71 aa)) is alpha C-terminal domain (alpha-CTD).

This sequence belongs to the RNA polymerase alpha chain family. As to quaternary structure, homodimer. The RNAP catalytic core consists of 2 alpha, 1 beta, 1 beta' and 1 omega subunit. When a sigma factor is associated with the core the holoenzyme is formed, which can initiate transcription.

The catalysed reaction is RNA(n) + a ribonucleoside 5'-triphosphate = RNA(n+1) + diphosphate. In terms of biological role, DNA-dependent RNA polymerase catalyzes the transcription of DNA into RNA using the four ribonucleoside triphosphates as substrates. This Symbiobacterium thermophilum (strain DSM 24528 / JCM 14929 / IAM 14863 / T) protein is DNA-directed RNA polymerase subunit alpha.